A 321-amino-acid polypeptide reads, in one-letter code: Fibronectin type III domain-containing protein 8 (321 aa).

A Fibronectin type-III domain is found at 175-277; sequence VPEVPFICEH…KPYKFATVST (103 aa).

The chain is Fibronectin type III domain-containing protein 8 (Fndc8) from Mus musculus (Mouse).